We begin with the raw amino-acid sequence, 81 residues long: MLQMLTLEEWAAEKYRSNPPSVSTLRRYAKQNLFCPPAMKQGRLWRVREDAELVGELVTPVIKKNDSLLLQRILSNGSQTA.

This sequence to lambdoid phages excisionases.

This is Prophage excisionase-like protein (xisE) from Escherichia coli (strain K12).